A 466-amino-acid polypeptide reads, in one-letter code: Histidine--tRNA ligase (466 aa).

This sequence belongs to the class-II aminoacyl-tRNA synthetase family. Homodimer.

The protein resides in the cytoplasm. It carries out the reaction tRNA(His) + L-histidine + ATP = L-histidyl-tRNA(His) + AMP + diphosphate + H(+). The polypeptide is Histidine--tRNA ligase (hisS) (Bifidobacterium longum (strain NCC 2705)).